Reading from the N-terminus, the 375-residue chain is Chaperone protein DnaJ (375 aa).

One can recognise a J domain in the interval 5 to 70 (DYYEVLGVNR…RKRASYDQFG (66 aa)). The CR-type zinc finger occupies 133–211 (GLSRTIKVPT…CHGQGRQQQT (79 aa)). Zn(2+) is bound by residues Cys-146, Cys-149, Cys-163, Cys-166, Cys-185, Cys-188, Cys-199, and Cys-202. CXXCXGXG motif repeat units follow at residues 146–153 (CKTCNGSG), 163–170 (CPRCNGSG), 185–192 (CSVCRGRG), and 199–206 (CTDCHGQG).

Belongs to the DnaJ family. As to quaternary structure, homodimer. Requires Zn(2+) as cofactor.

Its subcellular location is the cytoplasm. Participates actively in the response to hyperosmotic and heat shock by preventing the aggregation of stress-denatured proteins and by disaggregating proteins, also in an autonomous, DnaK-independent fashion. Unfolded proteins bind initially to DnaJ; upon interaction with the DnaJ-bound protein, DnaK hydrolyzes its bound ATP, resulting in the formation of a stable complex. GrpE releases ADP from DnaK; ATP binding to DnaK triggers the release of the substrate protein, thus completing the reaction cycle. Several rounds of ATP-dependent interactions between DnaJ, DnaK and GrpE are required for fully efficient folding. Also involved, together with DnaK and GrpE, in the DNA replication of plasmids through activation of initiation proteins. In Coxiella burnetii (strain CbuK_Q154) (Coxiella burnetii (strain Q154)), this protein is Chaperone protein DnaJ.